The sequence spans 291 residues: Acetyl-coenzyme A carboxylase carboxyl transferase subunit beta (291 aa).

Residues 36–291 (MWVKCDGCGK…KILVIHGRGN (256 aa)) form the CoA carboxyltransferase N-terminal domain. Cysteine 40, cysteine 43, cysteine 59, and cysteine 62 together coordinate Zn(2+). The C4-type zinc finger occupies 40–62 (CDGCGKVLYKNDMEKNNKVCYHC).

This sequence belongs to the AccD/PCCB family. Acetyl-CoA carboxylase is a heterohexamer composed of biotin carboxyl carrier protein (AccB), biotin carboxylase (AccC) and two subunits each of ACCase subunit alpha (AccA) and ACCase subunit beta (AccD). The cofactor is Zn(2+).

Its subcellular location is the cytoplasm. The enzyme catalyses N(6)-carboxybiotinyl-L-lysyl-[protein] + acetyl-CoA = N(6)-biotinyl-L-lysyl-[protein] + malonyl-CoA. Its pathway is lipid metabolism; malonyl-CoA biosynthesis; malonyl-CoA from acetyl-CoA: step 1/1. Functionally, component of the acetyl coenzyme A carboxylase (ACC) complex. Biotin carboxylase (BC) catalyzes the carboxylation of biotin on its carrier protein (BCCP) and then the CO(2) group is transferred by the transcarboxylase to acetyl-CoA to form malonyl-CoA. This chain is Acetyl-coenzyme A carboxylase carboxyl transferase subunit beta, found in Clostridium kluyveri (strain NBRC 12016).